The primary structure comprises 122 residues: Large ribosomal subunit protein uL22 (122 aa).

Residues V102–K122 are disordered.

Belongs to the universal ribosomal protein uL22 family. As to quaternary structure, part of the 50S ribosomal subunit.

This protein binds specifically to 23S rRNA; its binding is stimulated by other ribosomal proteins, e.g. L4, L17, and L20. It is important during the early stages of 50S assembly. It makes multiple contacts with different domains of the 23S rRNA in the assembled 50S subunit and ribosome. In terms of biological role, the globular domain of the protein is located near the polypeptide exit tunnel on the outside of the subunit, while an extended beta-hairpin is found that lines the wall of the exit tunnel in the center of the 70S ribosome. This chain is Large ribosomal subunit protein uL22, found in Helicobacter pylori (strain HPAG1).